A 151-amino-acid polypeptide reads, in one-letter code: Aspartate carbamoyltransferase regulatory chain (151 aa).

Zn(2+) contacts are provided by Cys108, Cys113, Cys138, and Cys141.

This sequence belongs to the PyrI family. In terms of assembly, contains catalytic and regulatory chains. Requires Zn(2+) as cofactor.

Involved in allosteric regulation of aspartate carbamoyltransferase. This chain is Aspartate carbamoyltransferase regulatory chain, found in Pyrobaculum neutrophilum (strain DSM 2338 / JCM 9278 / NBRC 100436 / V24Sta) (Thermoproteus neutrophilus).